The chain runs to 857 residues: DNA mismatch repair protein MutS (857 aa).

608-615 (GPNMSGKS) is a binding site for ATP.

Belongs to the DNA mismatch repair MutS family.

In terms of biological role, this protein is involved in the repair of mismatches in DNA. It is possible that it carries out the mismatch recognition step. This protein has a weak ATPase activity. The polypeptide is DNA mismatch repair protein MutS (Lactobacillus gasseri (strain ATCC 33323 / DSM 20243 / BCRC 14619 / CIP 102991 / JCM 1131 / KCTC 3163 / NCIMB 11718 / NCTC 13722 / AM63)).